The primary structure comprises 236 residues: 3-deoxy-D-manno-octulosonic acid kinase (236 aa).

D167 is an active-site residue.

Belongs to the protein kinase superfamily. KdkA/RfaP family.

Its subcellular location is the cell inner membrane. The enzyme catalyses an alpha-Kdo-(2-&gt;6)-lipid IVA + ATP = a 4-O-phospho-alpha-Kdo-(2-&gt;6)-lipid IVA + ADP + H(+). Its pathway is bacterial outer membrane biogenesis; LPS core biosynthesis. In terms of biological role, catalyzes the ATP-dependent phosphorylation of the 3-deoxy-D-manno-octulosonic acid (Kdo) residue in Kdo-lipid IV(A) at the 4-OH position. This Vibrio vulnificus (strain YJ016) protein is 3-deoxy-D-manno-octulosonic acid kinase.